Here is a 116-residue protein sequence, read N- to C-terminus: Aspartate 1-decarboxylase (116 aa).

The Schiff-base intermediate with substrate; via pyruvic acid role is filled by serine 25. Serine 25 bears the Pyruvic acid (Ser) mark. A substrate-binding site is contributed by threonine 57. Tyrosine 58 acts as the Proton donor in catalysis. Residue 73–75 (GAA) participates in substrate binding.

This sequence belongs to the PanD family. In terms of assembly, heterooctamer of four alpha and four beta subunits. It depends on pyruvate as a cofactor. Is synthesized initially as an inactive proenzyme, which is activated by self-cleavage at a specific serine bond to produce a beta-subunit with a hydroxyl group at its C-terminus and an alpha-subunit with a pyruvoyl group at its N-terminus.

Its subcellular location is the cytoplasm. It catalyses the reaction L-aspartate + H(+) = beta-alanine + CO2. Its pathway is cofactor biosynthesis; (R)-pantothenate biosynthesis; beta-alanine from L-aspartate: step 1/1. Catalyzes the pyruvoyl-dependent decarboxylation of aspartate to produce beta-alanine. In Leptospira interrogans serogroup Icterohaemorrhagiae serovar Lai (strain 56601), this protein is Aspartate 1-decarboxylase.